The sequence spans 122 residues: Large ribosomal subunit protein uL14 (122 aa).

This sequence belongs to the universal ribosomal protein uL14 family. As to quaternary structure, part of the 50S ribosomal subunit. Forms a cluster with proteins L3 and L19. In the 70S ribosome, L14 and L19 interact and together make contacts with the 16S rRNA in bridges B5 and B8.

Functionally, binds to 23S rRNA. Forms part of two intersubunit bridges in the 70S ribosome. In Nostoc punctiforme (strain ATCC 29133 / PCC 73102), this protein is Large ribosomal subunit protein uL14.